We begin with the raw amino-acid sequence, 326 residues long: Dipeptide transport ATP-binding protein DppD (326 aa).

One can recognise an ABC transporter domain in the interval 5-255 (IRVEDLRAVY…PLHPYTRGLI (251 aa)). Residues 44-49 (ASGKST), Asn-61, and Gln-97 each bind ATP. [4Fe-4S] cluster is bound by residues Cys-285, Cys-291, Cys-298, and Cys-316.

It belongs to the ABC transporter superfamily.

It localises to the cell membrane. It catalyses the reaction a dipeptide(out) + ATP + H2O = a dipeptide(in) + ADP + phosphate + H(+). With respect to regulation, the C-terminal iron-sulfur cluster may stabilize the structure of the C-terminal loops and may function in the regulation of the transport process. Part of the ABC transporter Dpp involved in dipeptide transport. Responsible for energy coupling to the transport system. The polypeptide is Dipeptide transport ATP-binding protein DppD (Caldanaerobacter subterraneus subsp. tengcongensis (strain DSM 15242 / JCM 11007 / NBRC 100824 / MB4) (Thermoanaerobacter tengcongensis)).